The sequence spans 202 residues: Ras-related protein ORAB-1 (202 aa).

GTP contacts are provided by residues 15–23 (GDSGVGKSC), 33–40 (YTESYIST), 63–67 (DTAGQ), 121–124 (NKCD), and 151–153 (SAK). The Effector region motif lies at 37–45 (YISTIGVDF). A disordered region spans residues 173–202 (MGPGATSGGSEKSNVNIQSTPVKSSGGGCC). The span at 180–195 (GGSEKSNVNIQSTPVK) shows a compositional bias: polar residues. 2 S-geranylgeranyl cysteine lipidation sites follow: cysteine 201 and cysteine 202.

The protein belongs to the small GTPase superfamily. Rab family.

It localises to the cell membrane. Functionally, protein transport. Probably involved in vesicular traffic. The sequence is that of Ras-related protein ORAB-1 from Diplobatis ommata (Ocellated electric ray).